A 345-amino-acid polypeptide reads, in one-letter code: Cysteinyl leukotriene receptor 2 (345 aa).

Residues 1–43 (MERKLMSLLPSISLSEMEPNSTLGNHNSNRSCTTENFKREFYP) lie on the Extracellular side of the membrane. N-linked (GlcNAc...) asparagine glycans are attached at residues N20 and N29. Residues 44–64 (IVYLVIFIWGALGNGFSIYVF) traverse the membrane as a helical segment. Over 65 to 73 (LKPYKKSTS) the chain is Cytoplasmic. A helical membrane pass occupies residues 74–94 (VNVFMLNLAISDLLFTITLPF). Residues 95–124 (RVDYYLRGSNXIFGDTPCRIMSYSMYVNMY) lie on the Extracellular side of the membrane. Cysteines 112 and 188 form a disulfide. A helical membrane pass occupies residues 125–145 (SSIYFLTVLSVVRFLATVHPF). Topologically, residues 146–154 (RLLHTTSIK) are cytoplasmic. A helical transmembrane segment spans residues 155–175 (NAWILCGVIWIFIMASSTVLL). At 176 to 205 (KNGSEQKDNVTLCLELNSNKVTKLKTMNYV) the chain is on the extracellular side. Residues N177 and N184 are each glycosylated (N-linked (GlcNAc...) asparagine). The helical transmembrane segment at 206-226 (ALVVGFVLPFGTLSICYLLII) threads the bilayer. Over 227 to 246 (RALLKVEVPESGLRLSHRKA) the chain is Cytoplasmic. The chain crosses the membrane as a helical span at residues 247–267 (LITVIIALIIFLLCFLPYHVL). Topologically, residues 268–287 (RTLHLLEWKADKCKDRLHKA) are extracellular. The helical transmembrane segment at 288–308 (VAVTLALAAANSCFNPFLYYF) threads the bilayer. Over 309 to 345 (AGENFKDRLKSALRKGRPQKTRCGFSVCVWLKKETRV) the chain is Cytoplasmic.

It belongs to the G-protein coupled receptor 1 family.

The protein localises to the cell membrane. In terms of biological role, receptor for cysteinyl leukotrienes. The response is mediated via a G-protein that activates a phosphatidylinositol-calcium second messenger system. This is Cysteinyl leukotriene receptor 2 (CYSLTR2) from Sus scrofa (Pig).